The following is a 491-amino-acid chain: UDP-N-acetylmuramate--L-alanine ligase (491 aa).

Residue 126-132 coordinates ATP; the sequence is GTHGKTT.

It belongs to the MurCDEF family.

It is found in the cytoplasm. The catalysed reaction is UDP-N-acetyl-alpha-D-muramate + L-alanine + ATP = UDP-N-acetyl-alpha-D-muramoyl-L-alanine + ADP + phosphate + H(+). Its pathway is cell wall biogenesis; peptidoglycan biosynthesis. Cell wall formation. This Escherichia coli (strain SMS-3-5 / SECEC) protein is UDP-N-acetylmuramate--L-alanine ligase.